Consider the following 176-residue polypeptide: Large ribosomal subunit protein eL20 (176 aa).

This sequence belongs to the eukaryotic ribosomal protein eL20 family. In terms of assembly, component of the large ribosomal subunit.

Its subcellular location is the cytoplasm. Component of the large ribosomal subunit. The ribosome is a large ribonucleoprotein complex responsible for the synthesis of proteins in the cell. The protein is Large ribosomal subunit protein eL20 (rpl18a) of Salmo salar (Atlantic salmon).